The sequence spans 319 residues: Putative peptide permease protein BRA0408/BS1330_II0405 (319 aa).

A run of 6 helical transmembrane segments spans residues 9–29 (LLIG…LLQL), 102–122 (LLLM…TGII), 138–158 (LALL…LYVF), 182–202 (LLRH…ALIM), 242–262 (LPVV…AIFI), and 284–304 (YPVI…VNIL). The ABC transmembrane type-1 domain maps to 98–305 (IGPTLLLMAA…ACVIIVNILT (208 aa)).

It belongs to the binding-protein-dependent transport system permease family. In terms of assembly, the complex is composed of two ATP-binding proteins (BRA0404 and BRA0405), two transmembrane proteins (BRA0407 and BRA0408) and a solute-binding protein (BRA0409).

It localises to the cell inner membrane. Probably part of an ABC transporter complex that could be involved in peptide import. Probably responsible for the translocation of the substrate across the membrane. The chain is Putative peptide permease protein BRA0408/BS1330_II0405 from Brucella suis biovar 1 (strain 1330).